We begin with the raw amino-acid sequence, 624 residues long: Plastin-2 (624 aa).

EF-hand domains lie at 9-44 (EEME…ANLP) and 49-84 (RVRE…LKSS). Ca(2+) is bound by residues D22, D24, N26, H28, E33, D62, N64, D66, K68, and E73. Calponin-homology (CH) domains follow at residues 118–234 (EEEK…KIGL), 262–373 (LSPE…NKYP), 392–501 (TREE…RRYT), and 513–621 (KIID…ARGM). 2 actin-binding regions span residues 118 to 373 (EEEK…NKYP) and 392 to 621 (TREE…ARGM).

Monomer. As to expression, expressed by macrophages (at protein level).

The protein resides in the cytoplasm. It is found in the cytoskeleton. It localises to the cell junction. Its subcellular location is the cell projection. The protein localises to the ruffle membrane. In terms of biological role, actin-binding protein. Plays a role in the activation of T-cells. In Danio rerio (Zebrafish), this protein is Plastin-2.